A 334-amino-acid chain; its full sequence is Holliday junction branch migration complex subunit RuvB (334 aa).

Positions 4-184 (EDRLISGTQK…FGIVQRLEYY (181 aa)) are large ATPase domain (RuvB-L). ATP-binding positions include Ile-23, Arg-24, Gly-65, Lys-68, Thr-69, Thr-70, 131–133 (EDY), Arg-174, Tyr-184, and Arg-221. Residue Thr-69 participates in Mg(2+) binding. The segment at 185–255 (DLKSLTRIVL…VAKLALDMLE (71 aa)) is small ATPAse domain (RuvB-S). The interval 258–334 (NEGFDYMDRK…YLHFGFDKPQ (77 aa)) is head domain (RuvB-H). The DNA site is built by Arg-313 and Arg-318.

This sequence belongs to the RuvB family. As to quaternary structure, homohexamer. Forms an RuvA(8)-RuvB(12)-Holliday junction (HJ) complex. HJ DNA is sandwiched between 2 RuvA tetramers; dsDNA enters through RuvA and exits via RuvB. An RuvB hexamer assembles on each DNA strand where it exits the tetramer. Each RuvB hexamer is contacted by two RuvA subunits (via domain III) on 2 adjacent RuvB subunits; this complex drives branch migration. In the full resolvosome a probable DNA-RuvA(4)-RuvB(12)-RuvC(2) complex forms which resolves the HJ.

It localises to the cytoplasm. It catalyses the reaction ATP + H2O = ADP + phosphate + H(+). Functionally, the RuvA-RuvB-RuvC complex processes Holliday junction (HJ) DNA during genetic recombination and DNA repair, while the RuvA-RuvB complex plays an important role in the rescue of blocked DNA replication forks via replication fork reversal (RFR). RuvA specifically binds to HJ cruciform DNA, conferring on it an open structure. The RuvB hexamer acts as an ATP-dependent pump, pulling dsDNA into and through the RuvAB complex. RuvB forms 2 homohexamers on either side of HJ DNA bound by 1 or 2 RuvA tetramers; 4 subunits per hexamer contact DNA at a time. Coordinated motions by a converter formed by DNA-disengaged RuvB subunits stimulates ATP hydrolysis and nucleotide exchange. Immobilization of the converter enables RuvB to convert the ATP-contained energy into a lever motion, pulling 2 nucleotides of DNA out of the RuvA tetramer per ATP hydrolyzed, thus driving DNA branch migration. The RuvB motors rotate together with the DNA substrate, which together with the progressing nucleotide cycle form the mechanistic basis for DNA recombination by continuous HJ branch migration. Branch migration allows RuvC to scan DNA until it finds its consensus sequence, where it cleaves and resolves cruciform DNA. The sequence is that of Holliday junction branch migration complex subunit RuvB from Psychromonas ingrahamii (strain DSM 17664 / CCUG 51855 / 37).